The sequence spans 118 residues: Large ribosomal subunit protein bL20 (118 aa).

It belongs to the bacterial ribosomal protein bL20 family.

Its function is as follows. Binds directly to 23S ribosomal RNA and is necessary for the in vitro assembly process of the 50S ribosomal subunit. It is not involved in the protein synthesizing functions of that subunit. This is Large ribosomal subunit protein bL20 from Pseudomonas entomophila (strain L48).